A 631-amino-acid polypeptide reads, in one-letter code: MNLFTRISSRTKKANLYYVTLVALLCIASYLLGIWQNTAVNPRAAFDDSDGTPCEGFTRPNSTKDLDFDAHHNIQDPPPVTETAVSFPSCAAALSEHTPCEDAKRSLKFSRERLEYRQRHCPEREEILKCRIPAPYGYKTPFRWPASRDVAWFANVPHTELTVEKKNQNWVRYENDRFWFPGGGTMFPRGADAYIDDIGRLIDLSDGSIRTAIDTGCGVASFGAYLLSRNITTMSFAPRDTHEAQVQFALERGVPAMIGIMATIRLPYPSRAFDLAHCSRCLIPWGQNDGAYLMEVDRVLRPGGYWILSGPPINWQKRWKGWERTMDDLNAEQTQIEQVARSLCWKKVVQRDDLAIWQKPFNHIDCKKTREVLKNPEFCRHDQDPDMAWYTKMDSCLTPLPEVDDAEDLKTVAGGKVEKWPARLNAIPPRVNKGALEEITPEAFLENTKLWKQRVSYYKKLDYQLGETGRYRNLVDMNAYLGGFAAALADDPVWVMNVVPVEAKLNTLGVIYERGLIGTYQNWCEAMSTYPRTYDFIHADSVFTLYQGQCEPEEILLEMDRILRPGGGVIIRDDVDVLIKVKELTKGLEWEGRIADHEKGPHEREKIYYAVKQYWTVPAPDEDKNNTSALS.

Over 1–14 (MNLFTRISSRTKKA) the chain is Cytoplasmic. A helical; Signal-anchor for type II membrane protein membrane pass occupies residues 15–35 (NLYYVTLVALLCIASYLLGIW). Over 36 to 631 (QNTAVNPRAA…EDKNNTSALS (596 aa)) the chain is Lumenal. 3 N-linked (GlcNAc...) asparagine glycosylation sites follow: N61, N230, and N626.

It belongs to the methyltransferase superfamily.

The protein resides in the endoplasmic reticulum membrane. The polypeptide is Probable methyltransferase PMT16 (Arabidopsis thaliana (Mouse-ear cress)).